The primary structure comprises 474 residues: Glutamate--tRNA ligase 1 (474 aa).

The 'HIGH' region signature appears at 10–20 (PSPTGFLHIGG). Positions 239-243 (KLSKR) match the 'KMSKS' region motif. Lys242 provides a ligand contact to ATP.

It belongs to the class-I aminoacyl-tRNA synthetase family. Glutamate--tRNA ligase type 1 subfamily. In terms of assembly, monomer.

It localises to the cytoplasm. The enzyme catalyses tRNA(Glu) + L-glutamate + ATP = L-glutamyl-tRNA(Glu) + AMP + diphosphate. In terms of biological role, catalyzes the attachment of glutamate to tRNA(Glu) in a two-step reaction: glutamate is first activated by ATP to form Glu-AMP and then transferred to the acceptor end of tRNA(Glu). The sequence is that of Glutamate--tRNA ligase 1 from Methylobacterium sp. (strain 4-46).